Consider the following 748-residue polypeptide: Photosystem I P700 chlorophyll a apoprotein A1 (748 aa).

8 consecutive transmembrane segments (helical) span residues 70–93 (VFSA…FHGA), 156–179 (LYST…YHYH), 195–219 (LNHH…HVSL), 291–309 (TAHH…GHQY), 346–369 (WHAQ…HHMY), 385–411 (LSLF…IFLV), 433–455 (AIIS…LYIH), and 530–548 (FLVH…LILL). Residues cysteine 572 and cysteine 581 each coordinate [4Fe-4S] cluster. A run of 2 helical transmembrane segments spans residues 588 to 609 (HVFL…HFSW) and 662 to 684 (LSAY…MFLF). Residue histidine 673 coordinates chlorophyll a'. Residues methionine 681 and tyrosine 689 each contribute to the chlorophyll a site. Tryptophan 690 lines the phylloquinone pocket. A helical membrane pass occupies residues 722–742 (AVGVAHYLLGGIATTWAFFLA).

Belongs to the PsaA/PsaB family. As to quaternary structure, the PsaA/B heterodimer binds the P700 chlorophyll special pair and subsequent electron acceptors. PSI consists of a core antenna complex that captures photons, and an electron transfer chain that converts photonic excitation into a charge separation. The eukaryotic PSI reaction center is composed of at least 11 subunits. P700 is a chlorophyll a/chlorophyll a' dimer, A0 is one or more chlorophyll a, A1 is one or both phylloquinones and FX is a shared 4Fe-4S iron-sulfur center. serves as cofactor.

The protein localises to the plastid. It localises to the chloroplast thylakoid membrane. It catalyses the reaction reduced [plastocyanin] + hnu + oxidized [2Fe-2S]-[ferredoxin] = oxidized [plastocyanin] + reduced [2Fe-2S]-[ferredoxin]. PsaA and PsaB bind P700, the primary electron donor of photosystem I (PSI), as well as the electron acceptors A0, A1 and FX. PSI is a plastocyanin-ferredoxin oxidoreductase, converting photonic excitation into a charge separation, which transfers an electron from the donor P700 chlorophyll pair to the spectroscopically characterized acceptors A0, A1, FX, FA and FB in turn. Oxidized P700 is reduced on the lumenal side of the thylakoid membrane by plastocyanin. The polypeptide is Photosystem I P700 chlorophyll a apoprotein A1 (Chaetosphaeridium globosum (Charophycean green alga)).